The following is a 289-amino-acid chain: Diaminopimelate epimerase (289 aa).

Asn-13, Gln-47, and Asn-67 together coordinate substrate. The active-site Proton donor is Cys-76. Substrate-binding positions include 77 to 78 (GN), Asn-167, Asn-200, and 218 to 219 (ER). The active-site Proton acceptor is the Cys-227. 228–229 (GT) provides a ligand contact to substrate.

Belongs to the diaminopimelate epimerase family. As to quaternary structure, homodimer.

The protein localises to the cytoplasm. The catalysed reaction is (2S,6S)-2,6-diaminopimelate = meso-2,6-diaminopimelate. It participates in amino-acid biosynthesis; L-lysine biosynthesis via DAP pathway; DL-2,6-diaminopimelate from LL-2,6-diaminopimelate: step 1/1. Catalyzes the stereoinversion of LL-2,6-diaminopimelate (L,L-DAP) to meso-diaminopimelate (meso-DAP), a precursor of L-lysine and an essential component of the bacterial peptidoglycan. The polypeptide is Diaminopimelate epimerase (Burkholderia mallei (strain NCTC 10247)).